Reading from the N-terminus, the 151-residue chain is Large ribosomal subunit protein uL22 (151 aa).

The segment covering 1–18 (MARINYSINADPENTSKA) has biased composition (polar residues). Positions 1-23 (MARINYSINADPENTSKAMGSEL) are disordered.

Belongs to the universal ribosomal protein uL22 family. As to quaternary structure, part of the 50S ribosomal subunit.

This protein binds specifically to 23S rRNA. It makes multiple contacts with different domains of the 23S rRNA in the assembled 50S subunit and ribosome. Its function is as follows. The globular domain of the protein is located near the polypeptide exit tunnel on the outside of the subunit, while an extended beta-hairpin is found that lines the wall of the exit tunnel in the center of the 70S ribosome. The chain is Large ribosomal subunit protein uL22 from Methanosarcina mazei (strain ATCC BAA-159 / DSM 3647 / Goe1 / Go1 / JCM 11833 / OCM 88) (Methanosarcina frisia).